The chain runs to 297 residues: Protein phosphatase PTC7 homolog (297 aa).

Residues 1 to 27 constitute a mitochondrion transit peptide; it reads MLSVLSYGRLVARAVIGGLSQTDSRDY. Positions 28 to 292 constitute a PPM-type phosphatase domain; it reads SLVSASFGFG…DDITVLLSIV (265 aa). Mn(2+) is bound by residues D71, G72, and D216.

This sequence belongs to the PP2C family. The cofactor is Mg(2+). Mn(2+) serves as cofactor.

It localises to the mitochondrion matrix. It catalyses the reaction O-phospho-L-seryl-[protein] + H2O = L-seryl-[protein] + phosphate. The catalysed reaction is O-phospho-L-threonyl-[protein] + H2O = L-threonyl-[protein] + phosphate. Functionally, protein phosphatase which positively regulates biosynthesis of the ubiquinone, coenzyme Q. Dephosphorylates the ubiquinone biosynthesis protein coq7 which is likely to lead to its activation. The sequence is that of Protein phosphatase PTC7 homolog (pptc7) from Danio rerio (Zebrafish).